The primary structure comprises 177 residues: Translation initiation factor IF-3 (177 aa).

Belongs to the IF-3 family. As to quaternary structure, monomer.

It is found in the cytoplasm. Functionally, IF-3 binds to the 30S ribosomal subunit and shifts the equilibrium between 70S ribosomes and their 50S and 30S subunits in favor of the free subunits, thus enhancing the availability of 30S subunits on which protein synthesis initiation begins. This chain is Translation initiation factor IF-3, found in Clostridium perfringens (strain 13 / Type A).